A 387-amino-acid chain; its full sequence is Pepsin A (387 aa).

The signal sequence occupies residues 1-15 (MKWLLLLSLVALSEC). Positions 16-61 (LYKVSLIKKKSLRKNLIEHGLLKDFLKNNTLDPASKYFPQGEAATM) are cleaved as a propeptide — activation peptide. A Peptidase A1 domain is found at 75 to 384 (YFGTIGIGTP…DRANNQVGLA (310 aa)). The active site involves Asp93. Cys106 and Cys111 are joined by a disulfide. At Ser129 the chain carries Phosphoserine. Cys267 and Cys271 are oxidised to a cystine. Asp276 is an active-site residue. Cys310 and Cys343 are disulfide-bonded.

The protein belongs to the peptidase A1 family.

It is found in the secreted. The catalysed reaction is Preferential cleavage: hydrophobic, preferably aromatic, residues in P1 and P1' positions. Cleaves 1-Phe-|-Val-2, 4-Gln-|-His-5, 13-Glu-|-Ala-14, 14-Ala-|-Leu-15, 15-Leu-|-Tyr-16, 16-Tyr-|-Leu-17, 23-Gly-|-Phe-24, 24-Phe-|-Phe-25 and 25-Phe-|-Tyr-26 bonds in the B chain of insulin.. Inhibited by pepstatin. Shows particularly broad specificity; although bonds involving phenylalanine and leucine are preferred, many others are also cleaved to some extent. This is Pepsin A (PGA) from Callithrix jacchus (White-tufted-ear marmoset).